Reading from the N-terminus, the 146-residue chain is Snake venom vascular endothelial growth factor toxin (146 aa).

The signal sequence occupies residues 1 to 24; the sequence is MAAYLLAVAILFCIQGWPLGTVQG. Q25 bears the Pyrrolidone carboxylic acid mark. Intrachain disulfides connect C38–C80, C69–C115, and C73–C117. The segment at 118–146 is disordered; that stretch reads RPRSASGVNSRKHKRNPEEGEQRAKFPFV. Basic and acidic residues predominate over residues 133 to 146; it reads NPEEGEQRAKFPFV.

The protein belongs to the PDGF/VEGF growth factor family. Snake venom VEGF subfamily. In terms of assembly, homodimer; disulfide-linked. Interacts with VEGF receptor-1 (FLT1) with a high affinity, whereas it binds to VEGF receptor-2 (KDR) with a low affinity. Does not bind VEGF receptor-3 (FLT4). In terms of tissue distribution, expressed by the venom gland.

The protein resides in the secreted. In terms of biological role, snake venom VEGFs that may contribute to venom dispersion and prey subjugation by inducing vascular permeability and hypotension. This protein induces an increase in capillary permeability after intradermal injection, as well as a drastic hypotensive effect after intravenous injection. The hypotension is mediated by nitric oxide (NO), which is produced by VEGF-activated endothelium NO synthase. Also induces angiogenesis in vitro. Like other crotalid VEGFs, this protein interacts with VEGF receptor-1 (FLT1) with a high affinity, whereas it binds to VEGF receptor-2 (KDR) with a low affinity. This chain is Snake venom vascular endothelial growth factor toxin, found in Bothrops erythromelas (Caatinga lance head).